The primary structure comprises 445 residues: MTPISVTQLNNQIKSIVESHFEIVLVEGEISKVVYHSSGHLYFTLKDENSSINCAMWKSNLTRMKFRLKEGEKVYVYGALSVYVPRGEYKIIAQSIEPSGVGALQKAFEQLKEELSKLGYFDEARKKSIPRFPRRIAIVTSATGAALQDMLRVAGKRWQLTEIYLFNALVQGDGAAEDIAMKIKLADEFVFEDGSGFDLIIIGRGGGSKEDLWPFNERVVADAVYNASTPIISAVGHEIDYLISDFVADVRAATPSNAMEIALPDKNEILLMLDEMKNAFVYKISHLIQKKERELIHIRELLNASSPVKKLDMKLQECELLLKRFNHSYINQIQKKEKELNELKNILFSLSPVIKINSFEKEIELLKSTFKNKTAQIISSKEKELINLKSAYETLNPKKREKKGFAEITKNGKRIDLKELKIGDIFDVSNADVLIKSKALEKIEN.

It belongs to the XseA family. In terms of assembly, heterooligomer composed of large and small subunits.

The protein resides in the cytoplasm. The enzyme catalyses Exonucleolytic cleavage in either 5'- to 3'- or 3'- to 5'-direction to yield nucleoside 5'-phosphates.. Bidirectionally degrades single-stranded DNA into large acid-insoluble oligonucleotides, which are then degraded further into small acid-soluble oligonucleotides. This is Exodeoxyribonuclease 7 large subunit from Nautilia profundicola (strain ATCC BAA-1463 / DSM 18972 / AmH).